Consider the following 395-residue polypeptide: Tyrosine--tRNA ligase 2 (395 aa).

A 'HIGH' region motif is present at residues 42–51 (PTAPDIHLGH). The short motif at 226–230 (KMSKS) is the 'KMSKS' region element. Lysine 229 lines the ATP pocket. The S4 RNA-binding domain occupies 334-394 (TPVANLLKDA…GKRKFARITI (61 aa)).

The protein belongs to the class-I aminoacyl-tRNA synthetase family. TyrS type 2 subfamily. As to quaternary structure, homodimer.

The protein localises to the cytoplasm. It catalyses the reaction tRNA(Tyr) + L-tyrosine + ATP = L-tyrosyl-tRNA(Tyr) + AMP + diphosphate + H(+). In terms of biological role, catalyzes the attachment of tyrosine to tRNA(Tyr) in a two-step reaction: tyrosine is first activated by ATP to form Tyr-AMP and then transferred to the acceptor end of tRNA(Tyr). The chain is Tyrosine--tRNA ligase 2 from Vibrio parahaemolyticus serotype O3:K6 (strain RIMD 2210633).